The following is a 493-amino-acid chain: Cysteine--tRNA ligase (493 aa).

Cys-31 provides a ligand contact to Zn(2+). A 'HIGH' region motif is present at residues 33-43 (PTVYGDAHLGH). Residues Cys-226, His-251, and Glu-255 each coordinate Zn(2+). The 'KMSKS' region motif lies at 283–287 (KMGKS). Lys-286 contributes to the ATP binding site.

The protein belongs to the class-I aminoacyl-tRNA synthetase family. As to quaternary structure, monomer. Zn(2+) serves as cofactor.

It is found in the cytoplasm. The catalysed reaction is tRNA(Cys) + L-cysteine + ATP = L-cysteinyl-tRNA(Cys) + AMP + diphosphate. This is Cysteine--tRNA ligase from Bacteroides thetaiotaomicron (strain ATCC 29148 / DSM 2079 / JCM 5827 / CCUG 10774 / NCTC 10582 / VPI-5482 / E50).